Consider the following 62-residue polypeptide: uncharacterized protein (62 aa).

The segment at 1–62 is disordered; that stretch reads MSSTAEEMAA…SNGEAKRKEK (62 aa). Residues 28–37 show a composition bias toward basic and acidic residues; it reads TKSDRVEHKH.

This is an uncharacterized protein from Caenorhabditis elegans.